The following is a 271-amino-acid chain: Chymotrypsin BII (271 aa).

The signal sequence occupies residues 1-15 (MIGKLSLLLVCVAVA). The propeptide at 16 to 45 (SGNPAAGKPWHWKSPKPLVDPRIHVNATPR) is activation peptide. Residues 46–268 (IVGGVEATPH…YLDWIEQKTG (223 aa)) enclose the Peptidase S1 domain. Cys71 and Cys87 are joined by a disulfide. Residues His86 and Asp132 each act as charge relay system in the active site. Disulfide bonds link Cys196/Cys209 and Cys219/Cys245. The active-site Charge relay system is Ser223.

It belongs to the peptidase S1 family.

It is found in the secreted. Its subcellular location is the extracellular space. The catalysed reaction is Preferential cleavage: Tyr-|-Xaa, Trp-|-Xaa, Phe-|-Xaa, Leu-|-Xaa.. Serine protease with chymotryptic and collagenolytic activities. This Penaeus vannamei (Whiteleg shrimp) protein is Chymotrypsin BII.